The chain runs to 188 residues: UPF0301 protein ABO_0112 (188 aa).

This sequence belongs to the UPF0301 (AlgH) family.

This is UPF0301 protein ABO_0112 from Alcanivorax borkumensis (strain ATCC 700651 / DSM 11573 / NCIMB 13689 / SK2).